Consider the following 291-residue polypeptide: tRNA dimethylallyltransferase (291 aa).

5-12 (GPTAGGKS) contacts ATP. Residue 7 to 12 (TAGGKS) coordinates substrate. Residues 30-33 (DSMQ) form an interaction with substrate tRNA region.

The protein belongs to the IPP transferase family. In terms of assembly, monomer. Mg(2+) serves as cofactor.

The catalysed reaction is adenosine(37) in tRNA + dimethylallyl diphosphate = N(6)-dimethylallyladenosine(37) in tRNA + diphosphate. Functionally, catalyzes the transfer of a dimethylallyl group onto the adenine at position 37 in tRNAs that read codons beginning with uridine, leading to the formation of N6-(dimethylallyl)adenosine (i(6)A). The polypeptide is tRNA dimethylallyltransferase (Frankia casuarinae (strain DSM 45818 / CECT 9043 / HFP020203 / CcI3)).